Here is a 302-residue protein sequence, read N- to C-terminus: MKLLMLCREPRLYSCQRLKEAAKHQGHEMDILDPNHCFLKLSQNPPHFQIFYQENSESKPYLLSDYDAVLPRFGTTSTQMGCSVLQHFEGKGTFCLNSSQAFLNARDKWKSLQLLLKAGIPVPNSLLSGGEVQAQATIPHISSPTILKTLNGSQGIGVILAEKPQSAVSIMEAFKQTNISMLQQDFIEEAGNADIRCFVIGDQVVATMQRIGQNGEFRANCHRGGKTEKITLSDEEKQIAIQATKAIGLDVAGVDLIRSKKGLLVLEVNASPGLEMIEKTSGIDIAAEIIDYIEINAFINSR.

An ATP-grasp domain is found at 112–294 (LQLLLKAGIP…IAAEIIDYIE (183 aa)). Residues Lys-148, 185–186 (DF), Asp-194, and 218–220 (RAN) contribute to the ATP site. Asp-255, Glu-267, and Asn-269 together coordinate Mg(2+). 3 residues coordinate Mn(2+): Asp-255, Glu-267, and Asn-269.

This sequence belongs to the RimK family. Requires Mg(2+) as cofactor. The cofactor is Mn(2+).

The sequence is that of Probable alpha-L-glutamate ligase from Haemophilus influenzae (strain ATCC 51907 / DSM 11121 / KW20 / Rd).